The sequence spans 341 residues: Serine/threonine-protein kinase-like protein At5g23170 (341 aa).

One can recognise a Protein kinase domain in the interval 16-298 (FSPSKLIGKG…FGEITAEIVA (283 aa)). ATP is bound by residues 22–30 (IGKGSHGYV) and lysine 51. A disordered region spans residues 52–75 (TPSSLSPSSPSSSSSSKSEQTKKL). Residues 53–69 (PSSLSPSSPSSSSSSKS) show a composition bias toward low complexity. Aspartate 153 acts as the Proton acceptor in catalysis. A coiled-coil region spans residues 311-332 (MSVLRRVVKLKRRKKRLRETLT).

Belongs to the protein kinase superfamily. Ser/Thr protein kinase family. Ubiquitous. Higher expression in mature stamina and pollen.

It carries out the reaction L-seryl-[protein] + ATP = O-phospho-L-seryl-[protein] + ADP + H(+). The catalysed reaction is L-threonyl-[protein] + ATP = O-phospho-L-threonyl-[protein] + ADP + H(+). This is Serine/threonine-protein kinase-like protein At5g23170 from Arabidopsis thaliana (Mouse-ear cress).